A 65-amino-acid chain; its full sequence is Large ribosomal subunit protein bL35 (65 aa).

The disordered stretch occupies residues 1–22; that stretch reads MPKIKTLRSAAKRFKKTASGKF. Positions 10–22 are enriched in basic residues; sequence AAKRFKKTASGKF.

The protein belongs to the bacterial ribosomal protein bL35 family.

This is Large ribosomal subunit protein bL35 from Buchnera aphidicola subsp. Schizaphis graminum (strain Sg).